The sequence spans 198 residues: Carnitine operon protein CaiE (198 aa).

Positions 179 to 198 (VEENRPRLKGTTDVKPKSAQ) are disordered. Over residues 180-198 (EENRPRLKGTTDVKPKSAQ) the composition is skewed to basic and acidic residues.

This sequence belongs to the transferase hexapeptide repeat family.

It functions in the pathway amine and polyamine metabolism; carnitine metabolism. In terms of biological role, overproduction of CaiE stimulates the activity of CaiB and CaiD. The sequence is that of Carnitine operon protein CaiE from Salmonella agona (strain SL483).